The chain runs to 257 residues: Pyridoxal phosphate homeostasis protein (257 aa).

Lys-47 carries the N6-(pyridoxal phosphate)lysine modification.

It belongs to the pyridoxal phosphate-binding protein YggS/PROSC family.

Pyridoxal 5'-phosphate (PLP)-binding protein, which is involved in PLP homeostasis. This is Pyridoxal phosphate homeostasis protein from Mycobacterium leprae (strain TN).